The primary structure comprises 569 residues: Glucose-6-phosphate isomerase, cytosolic 2A (569 aa).

The active-site Proton donor is Glu-360. Catalysis depends on residues His-391 and Lys-516.

This sequence belongs to the GPI family. Homodimer.

Its subcellular location is the cytoplasm. The enzyme catalyses alpha-D-glucose 6-phosphate = beta-D-fructose 6-phosphate. It participates in carbohydrate degradation; glycolysis; D-glyceraldehyde 3-phosphate and glycerone phosphate from D-glucose: step 2/4. In Clarkia lewisii (Farewell-to-spring), this protein is Glucose-6-phosphate isomerase, cytosolic 2A (PGIC2-A).